A 794-amino-acid chain; its full sequence is uncharacterized protein (794 aa).

The signal sequence occupies residues 1–22 (MKLKYGTIIFSGLLGVSAILAA). Cys-23 carries the N-palmitoyl cysteine lipid modification. Cys-23 is lipidated: S-diacylglycerol cysteine. The span at 177-196 (SSGKTQVSQTSSGSNQQKTL) shows a compositional bias: polar residues. Disordered regions lie at residues 177-208 (SSGK…SDSS), 220-257 (AKNN…DKKI), and 466-506 (KSTD…ENNS). A compositionally biased stretch (low complexity) spans 220–231 (AKNNGKKANNSK). Over residues 238–250 (DQSTQTHNDQGDA) the composition is skewed to polar residues.

The protein belongs to the MG185/MG260 family.

The protein localises to the cell membrane. This is an uncharacterized protein from Mycoplasma pneumoniae (strain ATCC 29342 / M129 / Subtype 1) (Mycoplasmoides pneumoniae).